The primary structure comprises 807 residues: DNA gyrase subunit B (807 aa).

The Toprim domain occupies 429-543 (SELFIVEGDS…KGYLYIAQPP (115 aa)). Positions 435, 508, and 510 each coordinate Mg(2+).

It belongs to the type II topoisomerase GyrB family. Heterotetramer, composed of two GyrA and two GyrB chains. In the heterotetramer, GyrA contains the active site tyrosine that forms a transient covalent intermediate with DNA, while GyrB binds cofactors and catalyzes ATP hydrolysis. Requires Mg(2+) as cofactor. Mn(2+) serves as cofactor. The cofactor is Ca(2+).

Its subcellular location is the cytoplasm. The catalysed reaction is ATP-dependent breakage, passage and rejoining of double-stranded DNA.. In terms of biological role, a type II topoisomerase that negatively supercoils closed circular double-stranded (ds) DNA in an ATP-dependent manner to modulate DNA topology and maintain chromosomes in an underwound state. Negative supercoiling favors strand separation, and DNA replication, transcription, recombination and repair, all of which involve strand separation. Also able to catalyze the interconversion of other topological isomers of dsDNA rings, including catenanes and knotted rings. Type II topoisomerases break and join 2 DNA strands simultaneously in an ATP-dependent manner. This is DNA gyrase subunit B from Rickettsia typhi (strain ATCC VR-144 / Wilmington).